The following is a 109-amino-acid chain: Lipoprotein BsmA (109 aa).

An N-terminal signal peptide occupies residues 1–24; sequence MVSRKRNSVIYRFASLLLVLMLSA. Cys-25 is lipidated: N-palmitoyl cysteine. The S-diacylglycerol cysteine moiety is linked to residue Cys-25.

Belongs to the BhsA/McbA family.

The protein localises to the cell membrane. Its function is as follows. Involved in protection of biofilms against oxidative stress. This Escherichia coli (strain K12) protein is Lipoprotein BsmA (bsmA).